The following is a 141-amino-acid chain: Protein C19orf12 homolog (141 aa).

The helical transmembrane segment at 37–57 (AVAFVGGLVGGPPGLAVGGAV) threads the bilayer.

This sequence belongs to the C19orf12 family.

The protein localises to the mitochondrion. The protein resides in the mitochondrion membrane. It is found in the endoplasmic reticulum. Its subcellular location is the cytoplasm. It localises to the cytosol. In Bos taurus (Bovine), this protein is Protein C19orf12 homolog.